The primary structure comprises 914 residues: DNA mismatch repair protein MutS (914 aa).

A disordered region spans residues 28–74 (NTNSVKDSNLNDEELSKNAELRPRKRKKSVLLQNSVGEQTEDFSNDE). 726–733 (GPNASGKS) is an ATP binding site.

The protein belongs to the DNA mismatch repair MutS family.

In terms of biological role, this protein is involved in the repair of mismatches in DNA. It is possible that it carries out the mismatch recognition step. This protein has a weak ATPase activity. This chain is DNA mismatch repair protein MutS, found in Prochlorococcus marinus (strain SARG / CCMP1375 / SS120).